Consider the following 83-residue polypeptide: Gene 3 protein (83 aa).

The sequence is that of Gene 3 protein (3) from Mycobacterium (Mycobacteriophage L5).